Reading from the N-terminus, the 385-residue chain is Putative nickel insertion protein (385 aa).

This sequence belongs to the LarC family.

This chain is Putative nickel insertion protein, found in Geobacter sp. (strain M21).